The primary structure comprises 451 residues: MRGAYYIITALLVVASSQELRGSGHQLQIYDHDVVKAVKAVMKTLPNRFLRESRDVHDDLANEERSFYSILADIINKGMDTMPRAAEGVELMPNAAEGVEKMPRAAEGVETIPHAAEGVENMPHVPDEGLSKALTGAKTALNKLWGPFSATTPIGDASHDVSSREQIDFEIGSWSIDLRGFKPIAVHDQHKDMIQRVYTKFGQLCGNNLNPTAEETSLIWTMFDSRIVPSSSKDDRLKLIWQARQNVRSDMRSISSSKKWRYRWQGSPDSLTLDVLNSLLNMHYQRWVRMYDIFKQERPDLIDAPSNSKHTLGGNKDSSSATTLHKHSKGLSSRPFEPLNAVMMSHGDRFVSTQRSKRTFGSNADTVSLPLKQPKMRSSKALMPLSATLGDYSVPPLKSRLNFGGASSAFVPYTHPKAHTSKSLAPASTTLTLKDSELELSLGGIYDKNTG.

Residues methionine 1–serine 17 form the signal peptide. A RxLR-dEER motif is present at residues arginine 48–arginine 65. The segment at aspartate 303 to phenylalanine 336 is disordered. Polar residues predominate over residues proline 305–threonine 323.

This sequence belongs to the RxLR effector family.

Its subcellular location is the secreted. The protein resides in the host nucleus. Secreted effector that completely suppresses the host cell death induced by cell death-inducing proteins. The sequence is that of Secreted RxLR effector protein 70 from Plasmopara viticola (Downy mildew of grapevine).